The following is an 887-amino-acid chain: MKGLNAKPFSHEAVRQKLLSGRESLQRRYHQNRNGAALLRDHSRLVDGILRQVWHEMNMPGSTALLAVGGYGRRQLFPYSDIDLVVLLPDKGDAAEAMDNELGTRLEHWVGLLWDIGLDIGHSVRTVKECGEEAANDITVQTSLLEARLLGGNSDLFDRFLQVMETMLAPRKFFVDKQLEQQQRHKRYQDAPYKLEPNIKESPGGLRDLQNVLWISRAAGFGKTWSELAKKGFIIRREARLIQRQQTVLQDLRIRLHYLGGRREDRLLFDYQNPLAEELGIAAKPPRRPGEMLMQRYYRAARSVTQVNTILLLTLHAEIFPDEEAVTTIINERFQKRGDLLEICEEDIFERDPGAILESVLLLQQNPDLKGRSFATLRAMWRSAPLITASFRREPRHCAMFMEILRQPRGLTRELRLMNRYGILGRYIPAFGRIIGQMQHDLFHVYTVDEHILMVVRNLRRFMAPEFAYEYPLCSRLINEFERPELLYLAGLFHDIAKGRQGDHSLLGKVDARRFCERHRMPAEDTELVVWLVENHLHMSATAQKKDIADAEVIADFAASMRDERHLIALYLLTVSDIRGTSPKVWNAWKGKLLEDLFHRTRQYLCGETALTDISLENRKNKVLQLLHPDDAAMRAYERFWSGLDSSYLMMHDPREIAWHTQHLSQRMKSPAPIVKTRAAETGAGVEVLVYTADQKDLFARICSFFDGIDYNIVQAKIHTTREGYALDSFLVLDPFNVANHDPREFQFIEQELTQQLEQQALMATPVKGRLSRHLRHFPITPQVSIEPDDSGAYYVLSITAGDQSGLLSRIAQVLVRFGLNVHSARINTLGERAEDTFLVTGSILSNSRSVIQLEANLIKVLHTSPQPETPGKAPGKPSAGDRIIPR.

Residues 1–329 are uridylyltransferase; the sequence is MKGLNAKPFS…FPDEEAVTTI (329 aa). The interval 330–686 is uridylyl-removing; the sequence is INERFQKRGD…TRAAETGAGV (357 aa). Residues 448–570 form the HD domain; it reads VDEHILMVVR…MRDERHLIAL (123 aa). ACT domains are found at residues 687-772 and 796-871; these read EVLV…GRLS and VLSI…PETP. The disordered stretch occupies residues 864–887; the sequence is TSPQPETPGKAPGKPSAGDRIIPR.

The protein belongs to the GlnD family. It depends on Mg(2+) as a cofactor.

The enzyme catalyses [protein-PII]-L-tyrosine + UTP = [protein-PII]-uridylyl-L-tyrosine + diphosphate. It carries out the reaction [protein-PII]-uridylyl-L-tyrosine + H2O = [protein-PII]-L-tyrosine + UMP + H(+). Its activity is regulated as follows. Uridylyltransferase (UTase) activity is inhibited by glutamine, while glutamine activates uridylyl-removing (UR) activity. In terms of biological role, modifies, by uridylylation and deuridylylation, the PII regulatory proteins (GlnB and homologs), in response to the nitrogen status of the cell that GlnD senses through the glutamine level. Under low glutamine levels, catalyzes the conversion of the PII proteins and UTP to PII-UMP and PPi, while under higher glutamine levels, GlnD hydrolyzes PII-UMP to PII and UMP (deuridylylation). Thus, controls uridylylation state and activity of the PII proteins, and plays an important role in the regulation of nitrogen assimilation and metabolism. This Nitrosospira multiformis (strain ATCC 25196 / NCIMB 11849 / C 71) protein is Bifunctional uridylyltransferase/uridylyl-removing enzyme.